The following is a 483-amino-acid chain: MPVSDFQVVLGLEVHAQLLTRSKIFCACPTEFGGAPNTHVCPVCLGLPGALPALNAAVVEMAIRTGLALGCEIQRRSVFARKNYFYPDLPKGYQISQYELPICSGGGVDIAVGGEARRIRLTRIHMEEDAGKNVHDVTAAGSGVDLNRAGVPLLEIVSEPDLRSIDEAIAYLKSLRAILMALGVNDGNLQEGSFRCDANVSVMPRGATRLGTRCELKNMNSFRFLRQAIDYEVRRQVELIESGGKVDQETRLFDPDRGETRSMRSKEEAHDYRYFPEPDLPPVLVDEALVERIRRELPELPRARSARYQRDLGLSAQDAELLVSDKGIGDFFDATLAAYGASPDAAKRIANLLNGDVARLANELSLEPAAWRIAPAQLAAILRLQDAQTIGGPGAKQVVEEVFRSGAEPAEVVREKGLAQVSDEGALEAAVDRVLAASAGEVERYRGGNKKLLGFFVGQVMKETRGKGNPAVVNALLKRKLGG.

This sequence belongs to the GatB/GatE family. GatB subfamily. In terms of assembly, heterotrimer of A, B and C subunits.

It carries out the reaction L-glutamyl-tRNA(Gln) + L-glutamine + ATP + H2O = L-glutaminyl-tRNA(Gln) + L-glutamate + ADP + phosphate + H(+). The catalysed reaction is L-aspartyl-tRNA(Asn) + L-glutamine + ATP + H2O = L-asparaginyl-tRNA(Asn) + L-glutamate + ADP + phosphate + 2 H(+). Its function is as follows. Allows the formation of correctly charged Asn-tRNA(Asn) or Gln-tRNA(Gln) through the transamidation of misacylated Asp-tRNA(Asn) or Glu-tRNA(Gln) in organisms which lack either or both of asparaginyl-tRNA or glutaminyl-tRNA synthetases. The reaction takes place in the presence of glutamine and ATP through an activated phospho-Asp-tRNA(Asn) or phospho-Glu-tRNA(Gln). The protein is Aspartyl/glutamyl-tRNA(Asn/Gln) amidotransferase subunit B of Anaeromyxobacter sp. (strain Fw109-5).